The chain runs to 67 residues: Phycobilisome 7.8 kDa linker polypeptide, allophycocyanin-associated, core (67 aa).

Residues 1–56 form the CpcD-like domain; that stretch reads GRLFKITACVPSQTRIRTQRELQNTYFTKLVPYENWFREQQRIQKMGGKIVKVELA.

Belongs to the phycobilisome linker protein family.

The protein localises to the cellular thylakoid membrane. Rod linker protein, associated with allophycocyanin. Linker polypeptides determine the state of aggregation and the location of the disk-shaped phycobiliprotein units within the phycobilisome and modulate their spectroscopic properties in order to mediate a directed and optimal energy transfer. The sequence is that of Phycobilisome 7.8 kDa linker polypeptide, allophycocyanin-associated, core (apcC) from Mastigocladus laminosus (Fischerella sp.).